Reading from the N-terminus, the 220-residue chain is NADH-quinone oxidoreductase subunit I (220 aa).

2 consecutive 4Fe-4S ferredoxin-type domains span residues Leu71–His102 and Asp112–Arg141. 8 residues coordinate [4Fe-4S] cluster: Cys82, Cys85, Cys88, Cys92, Cys121, Cys124, Cys127, and Cys131. A disordered region spans residues Met187–Val220. Over residues Pro198–Thr207 the composition is skewed to basic and acidic residues.

This sequence belongs to the complex I 23 kDa subunit family. NDH-1 is composed of 14 different subunits. Subunits NuoA, H, J, K, L, M, N constitute the membrane sector of the complex. [4Fe-4S] cluster serves as cofactor.

Its subcellular location is the cell inner membrane. The enzyme catalyses a quinone + NADH + 5 H(+)(in) = a quinol + NAD(+) + 4 H(+)(out). Functionally, NDH-1 shuttles electrons from NADH, via FMN and iron-sulfur (Fe-S) centers, to quinones in the respiratory chain. The immediate electron acceptor for the enzyme in this species is believed to be ubiquinone. Couples the redox reaction to proton translocation (for every two electrons transferred, four hydrogen ions are translocated across the cytoplasmic membrane), and thus conserves the redox energy in a proton gradient. This is NADH-quinone oxidoreductase subunit I from Helicobacter pylori (strain HPAG1).